A 233-amino-acid polypeptide reads, in one-letter code: Protein YIPF6 (233 aa).

Residues 1-84 (MAETEGFGDS…PKKSTTLLRD (84 aa)) are Cytoplasmic-facing. The helical transmembrane segment at 85-105 (WDLWGPLVLCVSLALMLQGGN) threads the bilayer. The Lumenal segment spans residues 106–111 (ADSKDD). A helical transmembrane segment spans residues 112–132 (GGPQFAEVFVIIWFGAVVITL). Topologically, residues 133–142 (NSKLLGGTIS) are cytoplasmic. The helical transmembrane segment at 143–163 (FFQSLCVLGYCILPLTVAMLV) threads the bilayer. Topologically, residues 164-180 (CRLVLLLSHTTASFIVR) are lumenal. The helical transmembrane segment at 181–201 (LVVVTVMFAWSTFASTAFLAD) threads the bilayer. Residues 202–208 (SQPPNRR) are Cytoplasmic-facing. The chain crosses the membrane as a helical span at residues 209–229 (ALAVYPIFLFYFVISWMVLTF). The Lumenal segment spans residues 230–233 (NTVS).

This sequence belongs to the YIP1 family.

It is found in the golgi apparatus membrane. This Xenopus tropicalis (Western clawed frog) protein is Protein YIPF6 (yipf6).